We begin with the raw amino-acid sequence, 571 residues long: Proline--tRNA ligase (571 aa).

The protein belongs to the class-II aminoacyl-tRNA synthetase family. ProS type 1 subfamily. Homodimer.

The protein resides in the cytoplasm. The enzyme catalyses tRNA(Pro) + L-proline + ATP = L-prolyl-tRNA(Pro) + AMP + diphosphate. Its function is as follows. Catalyzes the attachment of proline to tRNA(Pro) in a two-step reaction: proline is first activated by ATP to form Pro-AMP and then transferred to the acceptor end of tRNA(Pro). As ProRS can inadvertently accommodate and process non-cognate amino acids such as alanine and cysteine, to avoid such errors it has two additional distinct editing activities against alanine. One activity is designated as 'pretransfer' editing and involves the tRNA(Pro)-independent hydrolysis of activated Ala-AMP. The other activity is designated 'posttransfer' editing and involves deacylation of mischarged Ala-tRNA(Pro). The misacylated Cys-tRNA(Pro) is not edited by ProRS. The chain is Proline--tRNA ligase from Actinobacillus pleuropneumoniae serotype 3 (strain JL03).